Reading from the N-terminus, the 60-residue chain is Large ribosomal subunit protein uL30 (60 aa).

Belongs to the universal ribosomal protein uL30 family. As to quaternary structure, part of the 50S ribosomal subunit.

The sequence is that of Large ribosomal subunit protein uL30 from Bacillus mycoides (strain KBAB4) (Bacillus weihenstephanensis).